Reading from the N-terminus, the 51-residue chain is Insulin (51 aa).

Cystine bridges form between C8-C37, C20-C50, and C36-C41.

The protein belongs to the insulin family. In terms of assembly, heterodimer of a B chain and an A chain linked by two disulfide bonds.

Its subcellular location is the secreted. Functionally, insulin decreases blood glucose concentration. It increases cell permeability to monosaccharides, amino acids and fatty acids. It accelerates glycolysis, the pentose phosphate cycle, and glycogen synthesis in liver. This Gadus morhua subsp. callarias (Baltic cod) protein is Insulin (ins).